A 389-amino-acid chain; its full sequence is MALSDRLEMVNPSEIRKLFDLAQGIEGIISLGIGEPDFDTPEHIKEYAKEALDKGLTHYSPNIGILELREAVAEKFKKHNGIDADPKTQIMITVGTNQQILMGLATFLKDNEEVLIPSPMFVSYAPAVILAGGKPVEVPTYEENEFRLSVDELEKYVTPKTRALIINTPNNPTGAVLTKKDLEEIADFAVEHDLMILSDEVYEYFVYDGVKNYSIASLDGMFERTITMNGFSKTFAMTGWRLGFLAAPEWVVEKMVRFQMYNATCPVTFIQYAAAKALRDERSWQAVEEMRREYERRRNLVWKRLNEMGLPTVKPKGAFYIFPRIKDTGLSSKEFSELMIKEAKVVVVPGSAFGQAGEGYVRISYATAYEKLEEAMDRMEKVLKEKKLV.

An N6-(pyridoxal phosphate)lysine modification is found at lysine 233.

This sequence belongs to the class-I pyridoxal-phosphate-dependent aminotransferase family. As to quaternary structure, homodimer. Pyridoxal 5'-phosphate is required as a cofactor.

The catalysed reaction is an aromatic L-alpha-amino acid + 2-oxoglutarate = an aromatic oxo-acid + L-glutamate. Functionally, catalyzes the transamination of phenylalanine, tyrosine and tryptophan. Shows virtually no activity towards aspartic acid, alanine, valine or isoleucine. This chain is Aromatic-amino-acid aminotransferase 2, found in Thermococcus litoralis (strain ATCC 51850 / DSM 5473 / JCM 8560 / NS-C).